A 225-amino-acid chain; its full sequence is RNA-binding protein 24 (225 aa).

The 78-residue stretch at 11-88 (TKIFVGGLPY…RKANVNLAYL (78 aa)) folds into the RRM domain.

The protein resides in the nucleus. It is found in the cytoplasm. Multifunctional RNA-binding protein involved in the regulation of pre-mRNA splicing, mRNA stability and mRNA translation important for cell fate decision and differentiation. Plays a major role in pre-mRNA alternative splicing regulation. Mediates preferentially muscle-specific exon inclusion in numerous mRNAs important for striated cardiac and skeletal muscle cell differentiation. Binds to intronic splicing enhancer (ISE) composed of stretches of GU-rich motifs localized in flanking intron of exon that will be included by alternative splicing. Involved in embryonic stem cell (ESC) transition to cardiac cell differentiation by promoting pre-mRNA alternative splicing events of several pluripotency and/or differentiation genes. Plays a role in the regulation of mRNA stability and mRNA translation to which it is bound. Involved in myogenic differentiation by regulating MYOG levels. Binds to a huge amount of mRNAs. Involved in embryonic heart development and myogenic differentiation of somitic muscle progenitors. The protein is RNA-binding protein 24 of Gallus gallus (Chicken).